Consider the following 505-residue polypeptide: Apolipoprotein N-acyltransferase (505 aa).

6 helical membrane-spanning segments follow: residues 15–46 (AAFV…LLLL), 55–75 (ALIA…WVHV), 89–109 (LFLM…FGWL), 129–149 (LWLI…WLWL), 161–181 (FAPI…AGSL), and 192–212 (MACI…MQWV). Residues 225-471 (IQGNIEQGLK…TGVLKATVTP (247 aa)) enclose the CN hydrolase domain. Glutamate 264 serves as the catalytic Proton acceptor. The active site involves lysine 330. Cysteine 382 (nucleophile) is an active-site residue. A helical transmembrane segment spans residues 479-499 (FLWGTTPLYLWVGLAAGFAFW).

This sequence belongs to the CN hydrolase family. Apolipoprotein N-acyltransferase subfamily.

Its subcellular location is the cell inner membrane. The enzyme catalyses N-terminal S-1,2-diacyl-sn-glyceryl-L-cysteinyl-[lipoprotein] + a glycerophospholipid = N-acyl-S-1,2-diacyl-sn-glyceryl-L-cysteinyl-[lipoprotein] + a 2-acyl-sn-glycero-3-phospholipid + H(+). The protein operates within protein modification; lipoprotein biosynthesis (N-acyl transfer). Catalyzes the phospholipid dependent N-acylation of the N-terminal cysteine of apolipoprotein, the last step in lipoprotein maturation. The chain is Apolipoprotein N-acyltransferase from Vibrio cholerae serotype O1 (strain ATCC 39315 / El Tor Inaba N16961).